A 417-amino-acid chain; its full sequence is MALNMRVSSSKVAAKQQGRISAVPVVSSKVASSARVAPFQGAPVAAQRAALLVRAAAATEVKAAEGRTGKELGQARPIFPFTAIVGQDEMKLALILNVIDPKIGGVMIMGDRGTGKSTTIRALADLLPEMQVVANDPFNSDPTDPELMSEEVRNRVKAGEQLPVSSKKIPMVDLPLGATEDRVCGTIDIEKALTEGVKAFEPGLLAKANRGILYVDEVNLLDDHLVDVLLDSAASGWNTVEREGISISHPARFILVGSGNPEEGELRPQLLDRFGMHAQIGTVKDPRLRVQIVSQRSTFDENPAAFRKDYEAGQMALTQRIVDARKLLKQGEVNYDFRVKISQICSDLNVDGIRGDIVTNRAAKALAAFEGRTEVTPEDIYRVIPLCLRHRLRKDPLAEIDDGDRVREIFKQVFGME.

Residues 1–54 constitute a chloroplast transit peptide; sequence MALNMRVSSSKVAAKQQGRISAVPVVSSKVASSARVAPFQGAPVAAQRAALLVR. ATP is bound at residue 110 to 117; sequence GDRGTGKS. The cysteines at positions 345 and 387 are disulfide-linked.

Belongs to the Mg-chelatase subunits D/I family. As to quaternary structure, the magnesium chelatase complex is a heterotrimer consisting of subunits CHLI, CHLD and CHLH.

It is found in the plastid. The protein resides in the chloroplast. It carries out the reaction protoporphyrin IX + Mg(2+) + ATP + H2O = Mg-protoporphyrin IX + ADP + phosphate + 3 H(+). It participates in porphyrin-containing compound metabolism; chlorophyll biosynthesis. Its activity is regulated as follows. Redox regulation; active in reducing conditions, inactive in oxidizing conditions. Thioredoxins f and m mediate the reversible reductive activation of oxidized CHLI. Involved in chlorophyll biosynthesis. Catalyzes the insertion of magnesium ion into protoporphyrin IX to yield Mg-protoporphyrin IX. The magnesium-chelatase is a complex of three subunits, CHLI, CHLD and CHLH. The reaction takes place in two steps, with an ATP-dependent activation followed by an ATP-dependent chelation step. In Chlamydomonas reinhardtii (Chlamydomonas smithii), this protein is Magnesium-chelatase subunit ChlI, chloroplastic (CHLI).